Reading from the N-terminus, the 386-residue chain is Methylthioribose-1-phosphate isomerase (386 aa).

The active-site Proton donor is D255.

This sequence belongs to the eIF-2B alpha/beta/delta subunits family. MtnA subfamily.

It localises to the cytoplasm. The protein resides in the nucleus. It carries out the reaction 5-(methylsulfanyl)-alpha-D-ribose 1-phosphate = 5-(methylsulfanyl)-D-ribulose 1-phosphate. The protein operates within amino-acid biosynthesis; L-methionine biosynthesis via salvage pathway; L-methionine from S-methyl-5-thio-alpha-D-ribose 1-phosphate: step 1/6. Functionally, catalyzes the interconversion of methylthioribose-1-phosphate (MTR-1-P) into methylthioribulose-1-phosphate (MTRu-1-P). The protein is Methylthioribose-1-phosphate isomerase of Trypanosoma brucei brucei (strain 927/4 GUTat10.1).